The sequence spans 207 residues: Holliday junction branch migration complex subunit RuvA (207 aa).

The segment at 1–65 (MYDYIRGILT…ETEHVLYGFS (65 aa)) is domain I. The tract at residues 66-144 (SRRERECFRM…DLLPLDSKAI (79 aa)) is domain II. A flexible linker region spans residues 145–155 (ASWESVKPSCM). Residues 155-207 (MDEGIQALAALGYSKPSAERMIAEAMSELPENASLAEILPIALKKNLQGLNKS) form a domain III region.

It belongs to the RuvA family. As to quaternary structure, homotetramer. Forms an RuvA(8)-RuvB(12)-Holliday junction (HJ) complex. HJ DNA is sandwiched between 2 RuvA tetramers; dsDNA enters through RuvA and exits via RuvB. An RuvB hexamer assembles on each DNA strand where it exits the tetramer. Each RuvB hexamer is contacted by two RuvA subunits (via domain III) on 2 adjacent RuvB subunits; this complex drives branch migration. In the full resolvosome a probable DNA-RuvA(4)-RuvB(12)-RuvC(2) complex forms which resolves the HJ.

Its subcellular location is the cytoplasm. Functionally, the RuvA-RuvB-RuvC complex processes Holliday junction (HJ) DNA during genetic recombination and DNA repair, while the RuvA-RuvB complex plays an important role in the rescue of blocked DNA replication forks via replication fork reversal (RFR). RuvA specifically binds to HJ cruciform DNA, conferring on it an open structure. The RuvB hexamer acts as an ATP-dependent pump, pulling dsDNA into and through the RuvAB complex. HJ branch migration allows RuvC to scan DNA until it finds its consensus sequence, where it cleaves and resolves the cruciform DNA. This is Holliday junction branch migration complex subunit RuvA from Chlamydia caviae (strain ATCC VR-813 / DSM 19441 / 03DC25 / GPIC) (Chlamydophila caviae).